The following is a 1095-amino-acid chain: MGNAGSMDSQQTDFRAHNVPLKLPMPEPGELEERFAIVLNAMNLPPDKARLLRQYDNEKKWELICDQERFQVKNPPHTYIQKLKGYLDPAVTRKKFRRRVQESTQVLRELEISLRTNHIGWVREFLNEENKGLDVLVEYLSFAQYAVTFDFESVESTVESSVDKSKPWSRSIEDLHRGSNLPSPVGNSVSRSGRHSALRYNTLPSRRTLKNSRLVSKKDDVHVCIMCLRAIMNYQYGFNMVMSHPHAVNEIALSLNNKNPRTKALVLELLAAVCLVRGGHEIILSAFDNFKEVCGEKQRFEKLMEHFRNEDNNIDFMVASMQFINIVVHSVEDMNFRVHLQYEFTKLGLDEYLDKLKHTESDKLQVQIQAYLDNVFDVGALLEDAETKNAALERVEELEENISHLSEKLQDTENEAMSKIVELEKQLMQRNKELDVVREIYKDANTQVHTLRKMVKEKEEAIQRQSTLEKKIHELEKQGTIKIQKKGDGDIAILPVVASGTLPTGSEVAVGNFVGPVMGAPSSGPLPPPPPPLPLSSDAPEAVQNGPATPPVPPPPPPPPPPPPPPPPPPPPPLPGPAAETLPAPPLPPPPPPSAPPLPGTSSPTVVFNSGLAAVKIKKPIKTKFRMPVFNWVALKPNQINGTVFNEIDDERILEDLNVDEFEEIFKTKAQGPAIDLSSSKQKITQKGSNKVTLLEANRAKNLAITLRKAGKTAEEICKAIHVFDLKTLPVDFVECLMRFLPTENEVKVLRLYERERKPLENLSDEDRFMMQFSKIERLMQKMTIMAFIGNFTESIQMLTPQLHSIIAASVSIKSSQKLKKILEIILALGNYMNSSKRGAVYGFKLQSLDLLLDTKSTDRKQTLLHYISNVVKEKYQQVSLFYNELHYVEKAAAVSLENVLLDVKELQRGMDLTKREYTMHDHNTLLKEFIFNNEGKLKKLQDDAKIAQDAFDDVVKYFGENPKTTPPSVFFPVFVRFVKAYKQAEEENELRKKQEQALMEKLLEQEALLEQQDPKSPSHKSKRQQQELIAELRRRQVKDNRHVYEGKDGAIEDIITALKKNNITKFPNVHSRVRISSSTPVVEDTQSWQASLFT.

The GBD/FH3 domain maps to 23–469; it reads LPMPEPGELE…EAIQRQSTLE (447 aa). A coiled-coil region spans residues 381 to 478; that stretch reads LLEDAETKNA…EKKIHELEKQ (98 aa). A disordered region spans residues 521 to 602; sequence PSSGPLPPPP…PSAPPLPGTS (82 aa). Composition is skewed to pro residues over residues 524-534, 548-576, and 583-599; these read GPLPPPPPPLP, ATPPVPPPPPPPPPPPPPPPPPPPPPLPG, and PAPPLPPPPPPSAPPLP. The FH2 domain occupies 617-1008; that stretch reads IKKPIKTKFR…LMEKLLEQEA (392 aa).

Belongs to the formin homology family. As to quaternary structure, interacts with TCP11L2; this interaction promotes muscle-derived satellite cell (MDSC) migration and differentiation.

The protein resides in the cytoplasm. Plays a role in the regulation of cell morphology and cytoskeletal organization. Required in the cortical actin filament dynamics. In Bos taurus (Bovine), this protein is Formin-like protein 2.